The sequence spans 1167 residues: Rhoptry neck protein 2-like protein 2 (1167 aa).

An N-terminal signal peptide occupies residues 1-20 (MSSNLAFLSLSLAESTASLG). The Cytoplasmic segment spans residues 21-977 (KSLEETRTRL…WVAKRSRSRK (957 aa)). The tract at residues 55–94 (GPGLSVEGKQTEQMSRKSAEDTRASSLSSDPDDGRAAQLA) is disordered. Basic and acidic residues predominate over residues 68-77 (MSRKSAEDTR). Residues 978-998 (LAIVSVLSLGLIFAYTLLSAL) form a helical membrane-spanning segment. The Extracellular portion of the chain corresponds to 999 to 1167 (DIAQFLTDSG…TPQRAQDGSR (169 aa)). Cys1015 and Cys1026 are disulfide-bonded.

This sequence belongs to the apicomplexan parasites RON2 family.

The protein localises to the secreted. Its subcellular location is the host cell membrane. In terms of biological role, may play a role in host cell invasion. This Toxoplasma gondii (strain ATCC 50611 / Me49) protein is Rhoptry neck protein 2-like protein 2 (RON2L2).